The sequence spans 365 residues: MSKQVVVVGGGVIGLLTAFNLAAKVGQVVVCDQGEVGRESSWAGGGIVSPLYPWRYSPAVTALAHWSQDFYPQLGERLFASTGVDPEVHTTGLYWLDLDDEAEALAWAAREQRPLSAVDISAAYDAVPVLGPGFKHAIYMAGVANVRNPRLVKSLKAALLALPNVSLREHCQITGFVQEKGRVTGVQTADGVLAADEVVLSAGAWSGDLLRTLGLELPVEPVKGQMILFKCAEDFLPSMVLAKGRYAIPRRDGHILVGSTLEHAGYDKTPTADALESLKASAVELLPELEGATVVAHWAGLRPGSPEGIPYIGPVPGHEGLWLNCGHYRNGLVLAPASCQLFTDLLTGAEPIIDPAPYAPEGRLG.

FAD is bound by residues 12-13 (VI), 32-33 (DQ), 40-41 (SS), 45-47 (GGI), and I173. Position 302 (R302) interacts with substrate. 327-333 (HYRNGLV) serves as a coordination point for FAD.

It belongs to the DAO family. ThiO subfamily. Monomer. It depends on FAD as a cofactor.

The enzyme catalyses glycine + O2 + H2O = glyoxylate + H2O2 + NH4(+). It carries out the reaction sarcosine + O2 + H2O = methylamine + glyoxylate + H2O2. It participates in cofactor biosynthesis; thiamine diphosphate biosynthesis. Functionally, catalyzes the oxidation of glycine, leading to glyoxyl imine and hydrogen peroxide as primary products; glyoxyl imine is used for the biosynthesis of the thiazole ring of thiamine. Otherwise, glyoxyl imine is spontaneously hydrolyzed in water to produce glyoxylate and ammonia. Can also use sarcosine (N-methylglycine) as substrate, and, to a lesser extent, N-ethylglycine and D-proline. Has no activity towards other amino-acids D-Asp, D-Glu, D-Gln, D-His, D-Leu, D-Lys, D-ornithine, D-Trp, D-Val, L-Ala, L-Asp, L-Glu, L-His, L-Leu, L-Lys, L-Met and L-Pro. This is Glycine oxidase from Pseudomonas putida (strain ATCC 47054 / DSM 6125 / CFBP 8728 / NCIMB 11950 / KT2440).